Consider the following 471-residue polypeptide: ATP synthase subunit beta (471 aa).

Residue 156–163 (GGAGVGKT) coordinates ATP.

The protein belongs to the ATPase alpha/beta chains family. F-type ATPases have 2 components, CF(1) - the catalytic core - and CF(0) - the membrane proton channel. CF(1) has five subunits: alpha(3), beta(3), gamma(1), delta(1), epsilon(1). CF(0) has three main subunits: a(1), b(2) and c(9-12). The alpha and beta chains form an alternating ring which encloses part of the gamma chain. CF(1) is attached to CF(0) by a central stalk formed by the gamma and epsilon chains, while a peripheral stalk is formed by the delta and b chains.

Its subcellular location is the cell membrane. The enzyme catalyses ATP + H2O + 4 H(+)(in) = ADP + phosphate + 5 H(+)(out). In terms of biological role, produces ATP from ADP in the presence of a proton gradient across the membrane. The catalytic sites are hosted primarily by the beta subunits. The chain is ATP synthase subunit beta from Staphylococcus carnosus (strain TM300).